Here is a 915-residue protein sequence, read N- to C-terminus: Protein O-mannosyl-transferase TMTC3 (915 aa).

Residues M1 to E8 are Cytoplasmic-facing. The chain crosses the membrane as a helical span at residues I9–V29. The Extracellular portion of the chain corresponds to F30–H93. The helical transmembrane segment at L94 to F114 threads the bilayer. Residues L115–S120 lie on the Cytoplasmic side of the membrane. Helical transmembrane passes span V121–G139 and V140–S158. At Y159–D166 the chain is on the cytoplasmic side. A helical transmembrane segment spans residues N167 to C187. The Extracellular portion of the chain corresponds to K188–T193. The helical transmembrane segment at V194–L214 threads the bilayer. Topologically, residues C215 to S231 are cytoplasmic. Residues M232 to I252 form a helical membrane-spanning segment. Topologically, residues R253–D317 are extracellular. A helical transmembrane segment spans residues I318 to I338. The Cytoplasmic segment spans residues R339–C353. A helical membrane pass occupies residues L354 to A374. Topologically, residues E375 to R376 are extracellular. The chain crosses the membrane as a helical span at residues V377–S397. The Cytoplasmic portion of the chain corresponds to T398–K404. Residues L405–H423 form a helical membrane-spanning segment. The Extracellular segment spans residues R424–E915. 9 TPR repeats span residues A446–D479, I480–I513, N529–F562, K563–N596, A597–H631, A669–F702, R703–H736, K738–N771, and V772–E805. N494 carries an N-linked (GlcNAc...) asparagine glycan. Y503 carries the post-translational modification Phosphotyrosine. N541 carries N-linked (GlcNAc...) asparagine glycosylation. The tract at residues K848–K892 is disordered. An N-linked (GlcNAc...) asparagine glycan is attached at N865. A compositionally biased stretch (low complexity) spans N865–Q874. Positions N878 to K892 are enriched in basic and acidic residues.

This sequence belongs to the TMTC family.

The protein resides in the membrane. Its subcellular location is the endoplasmic reticulum. It carries out the reaction a di-trans,poly-cis-dolichyl beta-D-mannosyl phosphate + L-seryl-[protein] = 3-O-(alpha-D-mannosyl)-L-seryl-[protein] + a di-trans,poly-cis-dolichyl phosphate + H(+). It catalyses the reaction a di-trans,poly-cis-dolichyl beta-D-mannosyl phosphate + L-threonyl-[protein] = 3-O-(alpha-D-mannosyl)-L-threonyl-[protein] + a di-trans,poly-cis-dolichyl phosphate + H(+). Its pathway is protein modification; protein glycosylation. In terms of biological role, transfers mannosyl residues to the hydroxyl group of serine or threonine residues. The 4 members of the TMTC family are O-mannosyl-transferases dedicated primarily to the cadherin superfamily, each member seems to have a distinct role in decorating the cadherin domains with O-linked mannose glycans at specific regions. Also acts as O-mannosyl-transferase on other proteins such as PDIA3. Involved in the positive regulation of proteasomal protein degradation in the endoplasmic reticulum (ER), and the control of ER stress response. The sequence is that of Protein O-mannosyl-transferase TMTC3 from Homo sapiens (Human).